We begin with the raw amino-acid sequence, 450 residues long: LanC-like protein 2 (450 aa).

The N-myristoyl glycine moiety is linked to residue Gly-2. The interval 2 to 15 (GETMSKRLKLHLGG) is interaction with inositol phospholipids. Tyr-198 bears the Phosphotyrosine mark.

This sequence belongs to the LanC-like protein family. In terms of assembly, interacts with an array of inositol phospholipids such as phosphatidylinositol 3-phosphate (PI3P), phosphatidylinositol 4-phosphate (PI4P) and phosphatidylinositol 5-phosphate (PI5P). PIP-binding enhances membrane association. Myristoylated. Essential for membrane association. As to expression, expressed in brain and testis.

The protein resides in the nucleus. The protein localises to the cytoplasm. Its subcellular location is the cell membrane. In terms of biological role, necessary for abscisic acid (ABA) binding on the cell membrane and activation of the ABA signaling pathway in granulocytes. The protein is LanC-like protein 2 (LANCL2) of Homo sapiens (Human).